A 504-amino-acid polypeptide reads, in one-letter code: Procardosin-A (504 aa).

The signal sequence occupies residues 1–24; that stretch reads MGTSIKANVLALFLFYLLSPTVFS. The propeptide occupies 25–68; the sequence is VSDDGLIRIGLKKRKVDRIDQLRGRRALMEGNARKDFGFRGTVR. One can recognise a Peptidase A1 domain in the interval 85–501; it reads YFGEIGIGTP…DYGNLLVGFA (417 aa). Asp-103 is a catalytic residue. Cys-116 and Cys-122 form a disulfide bridge. Asn-139 carries N-linked (GlcNAc...) asparagine glycosylation. Residues 246–248 carry the RGD motif motif; it reads RGD. Residues Cys-277 and Cys-281 are joined by a disulfide bond. Asp-286 is a catalytic residue. Positions 310-414 are cleaved as a propeptide — plant-specific insert; it reads GVMNQQCKTV…YANELCEHLS (105 aa). The 106-residue stretch at 311 to 416 folds into the Saposin B-type domain; the sequence is VMNQQCKTVV…NELCEHLSTS (106 aa). 4 cysteine pairs are disulfide-bonded: Cys-316–Cys-410, Cys-341–Cys-382, Cys-347–Cys-379, and Cys-424–Cys-461. Residue Asn-432 is glycosylated (N-linked (GlcNAc...) asparagine). Positions 455–457 match the KGE motif motif; sequence KGE.

Belongs to the peptidase A1 family. As to quaternary structure, heterodimer of a light chain and a heavy chain. An intermediate form (35 kDa and 30 kDa subunits) is produced first, and undergoes proteolytic processing to remove the internal plant-specific insert (PSI) and the propeptide. There is some heterogeniety at the cleavage site. Interacts (via RGD or KGE motifs) with PLD1 (via C2 domain). In terms of processing, N-glycosylated. Glycans found at Asn-139 include approximately 6% oligomannose, 82% oligosaccharides of the plant modified type with proximal fucose but without xylose and 6% oligosaccharides of the plant modified type with proximal fucose and xylose. Glycans found at Asn-432 include 14% oligosaccharides of the plant modified type with proximal fucose but without xylose and 86% oligosaccharides of the plant modified type with proximal fucose and xylose. Detected only in pistils, not in seeds, roots, midribs, bracts, stamens, pollen, vascular or supporting tissues. Detected in seeds. High amounts are detected in the broad outer region of the upper portion of the stigma, towards the lower portion of the stigma it accumulates at the periphery. Within the stigma, expressed mainly in the epidermic papillae, lower levels are found in the cortical parenchyma. Present mainly in epidermal cells within the stye (at protein level). Expressed in young flower buds, and at lower levels in seeds, pollen and bracteas, but not in roots or leaves.

It is found in the microsome membrane. Its subcellular location is the protein storage vacuole. It localises to the secreted. The protein resides in the cell wall. The protein localises to the extracellular space. It is found in the extracellular matrix. Its activity is regulated as follows. Inhibited by the specific aspartic proteinase inhibitors diazoacetyl-noleucine methyl ester and pepstatin. Its function is as follows. Aspartic proteinase with a high preference for bonds between hydrophobic residues. Cleaves alpha-lactalbumin but not beta-lactoglobulin. The polypeptide is Procardosin-A (Cynara cardunculus (Cardoon)).